Here is a 790-residue protein sequence, read N- to C-terminus: Pentatricopeptide repeat-containing protein OTP51, chloroplastic (790 aa).

Residues 1-56 (MATTSPCAAPSPSLRCPLALSHPFASPPPPPALRLAGPKLLPGRLAVSPPPGIPAV) constitute a chloroplast transit peptide. 10 PPR repeats span residues 182 to 216 (NFALATRVADCLGRDGKVEKCREVFEAMVKQGRVP), 217 to 254 (AESTFHILIVAYLSVPKGRCLEEACTIYNQMIQMGGYK), 256 to 296 (RLSL…NLDV), 299 to 333 (DVYAGLIWLHSYQDVIDRERIIALRKEMKQAGFDE), 334 to 368 (GIDVLVSVMRAFSKEGNVAETEATWHNILQSGSDL), 369 to 403 (PVQAYVCRMEAYARTGEPMKSLDMFKEMKDKNIPP), 404 to 438 (NVASYHKIIEIMTKALEVDIVEQLMNEFIESDMKH), 439 to 469 (LMPAFLDLMYMYMDLDMHEKLELTFLKCIAR), 473 to 507 (NRILYTIYLESLVKVGNIEKAEEVFGEMHNNGMIG), and 509 to 543 (NTKSCNIMLRGYLSAEDYQKAEKVYDMMSKKKYDV). The disordered stretch occupies residues 762–790 (GSSIGSDGTQDTDTDSDDDMQMSDTERDE). The segment covering 771-790 (QDTDTDSDDDMQMSDTERDE) has biased composition (acidic residues).

Belongs to the PPR family. P subfamily.

The protein resides in the plastid. The protein localises to the chloroplast. Promotes the splicing of group II introns in chloroplasts. Required for the splicing of intron 2 of plastid ycf3 transcripts, a factor required for the assembly of photosystem I (PSI). Involved in the splicing of atpF, ndhA, petB and rps16 chloroplastic transcripts. Required for the assembly of PSI. This Oryza sativa subsp. japonica (Rice) protein is Pentatricopeptide repeat-containing protein OTP51, chloroplastic.